Here is a 90-residue protein sequence, read N- to C-terminus: Small ribosomal subunit protein uS15c (90 aa).

This sequence belongs to the universal ribosomal protein uS15 family. Part of the 30S ribosomal subunit.

It localises to the plastid. Its subcellular location is the chloroplast. The sequence is that of Small ribosomal subunit protein uS15c (rps15) from Lotus japonicus (Lotus corniculatus var. japonicus).